A 155-amino-acid chain; its full sequence is MAPK regulated corepressor interacting protein 2 (155 aa).

Methionine 1 bears the N-acetylmethionine mark. The tract at residues 1–59 (MYTITKGPSKLVAQRRTGPTQQQVESRLGELLKCRHSAPTPQHPRAQPPGPWPLSSPGP) is disordered. Arginine 35 bears the Omega-N-methylarginine mark. The segment covering 46-56 (AQPPGPWPLSS) has biased composition (pro residues). Phosphoserine is present on serine 56. Arginine 60 is modified (omega-N-methylarginine). Serine 77 is modified (phosphoserine).

Belongs to the MCRIP family. As to quaternary structure, interacts with DDX6. Interacts with MCRIP1.

It localises to the cytoplasm. Its subcellular location is the stress granule. The protein localises to the nucleus. This chain is MAPK regulated corepressor interacting protein 2 (MCRIP2), found in Bos taurus (Bovine).